The sequence spans 901 residues: Protein translocase subunit SecA (901 aa).

ATP is bound by residues Gln-87, 105-109, and Asp-512; that span reads GEGKT. The segment at 852–901 is disordered; the sequence is AQMQQLSHQDDDSAAAAALAAQTGDRKVGRNDPCPCGSGKKYKQCHGRLS. Positions 885, 887, 896, and 897 each coordinate Zn(2+). The span at 891 to 901 shows a compositional bias: basic residues; that stretch reads KKYKQCHGRLS.

The protein belongs to the SecA family. Monomer and homodimer. Part of the essential Sec protein translocation apparatus which comprises SecA, SecYEG and auxiliary proteins SecDF-YajC and YidC. Zn(2+) is required as a cofactor.

The protein localises to the cell inner membrane. It is found in the cytoplasm. The enzyme catalyses ATP + H2O + cellular proteinSide 1 = ADP + phosphate + cellular proteinSide 2.. In terms of biological role, part of the Sec protein translocase complex. Interacts with the SecYEG preprotein conducting channel. Has a central role in coupling the hydrolysis of ATP to the transfer of proteins into and across the cell membrane, serving both as a receptor for the preprotein-SecB complex and as an ATP-driven molecular motor driving the stepwise translocation of polypeptide chains across the membrane. In Citrobacter koseri (strain ATCC BAA-895 / CDC 4225-83 / SGSC4696), this protein is Protein translocase subunit SecA.